A 184-amino-acid polypeptide reads, in one-letter code: ATP synthase subunit b, chloroplastic (184 aa).

A helical membrane pass occupies residues 27-49; the sequence is LATNPINLSVVLGVLIFFGKGVL.

It belongs to the ATPase B chain family. As to quaternary structure, F-type ATPases have 2 components, F(1) - the catalytic core - and F(0) - the membrane proton channel. F(1) has five subunits: alpha(3), beta(3), gamma(1), delta(1), epsilon(1). F(0) has four main subunits: a(1), b(1), b'(1) and c(10-14). The alpha and beta chains form an alternating ring which encloses part of the gamma chain. F(1) is attached to F(0) by a central stalk formed by the gamma and epsilon chains, while a peripheral stalk is formed by the delta, b and b' chains.

It localises to the plastid. The protein resides in the chloroplast thylakoid membrane. F(1)F(0) ATP synthase produces ATP from ADP in the presence of a proton or sodium gradient. F-type ATPases consist of two structural domains, F(1) containing the extramembraneous catalytic core and F(0) containing the membrane proton channel, linked together by a central stalk and a peripheral stalk. During catalysis, ATP synthesis in the catalytic domain of F(1) is coupled via a rotary mechanism of the central stalk subunits to proton translocation. Functionally, component of the F(0) channel, it forms part of the peripheral stalk, linking F(1) to F(0). This is ATP synthase subunit b, chloroplastic from Solanum bulbocastanum (Wild potato).